A 469-amino-acid chain; its full sequence is Trigger factor (469 aa).

Residues 166-245 (GDFLTIDITA…VKSVKERELP (80 aa)) enclose the PPIase FKBP-type domain. The interval 430-469 (GGEEEAAEAEAAPAVDSDAVEGEAATEEAAPSDDPAAVKF) is disordered.

It belongs to the FKBP-type PPIase family. Tig subfamily.

The protein localises to the cytoplasm. The enzyme catalyses [protein]-peptidylproline (omega=180) = [protein]-peptidylproline (omega=0). Involved in protein export. Acts as a chaperone by maintaining the newly synthesized protein in an open conformation. Functions as a peptidyl-prolyl cis-trans isomerase. The sequence is that of Trigger factor from Arthrobacter sp. (strain FB24).